The following is a 431-amino-acid chain: Histidinol dehydrogenase (431 aa).

Y127, Q185, and N208 together coordinate NAD(+). 3 residues coordinate substrate: S234, Q256, and H259. Positions 256 and 259 each coordinate Zn(2+). Active-site proton acceptor residues include E323 and H324. The substrate site is built by H324, D357, E411, and H416. D357 is a Zn(2+) binding site. Position 416 (H416) interacts with Zn(2+).

This sequence belongs to the histidinol dehydrogenase family. It depends on Zn(2+) as a cofactor.

The catalysed reaction is L-histidinol + 2 NAD(+) + H2O = L-histidine + 2 NADH + 3 H(+). The protein operates within amino-acid biosynthesis; L-histidine biosynthesis; L-histidine from 5-phospho-alpha-D-ribose 1-diphosphate: step 9/9. In terms of biological role, catalyzes the sequential NAD-dependent oxidations of L-histidinol to L-histidinaldehyde and then to L-histidine. The polypeptide is Histidinol dehydrogenase (Vibrio cholerae serotype O1 (strain ATCC 39315 / El Tor Inaba N16961)).